Consider the following 129-residue polypeptide: Small ribosomal subunit protein uS11 (129 aa).

Belongs to the universal ribosomal protein uS11 family. In terms of assembly, part of the 30S ribosomal subunit. Interacts with proteins S7 and S18. Binds to IF-3.

Located on the platform of the 30S subunit, it bridges several disparate RNA helices of the 16S rRNA. Forms part of the Shine-Dalgarno cleft in the 70S ribosome. This chain is Small ribosomal subunit protein uS11, found in Geobacillus stearothermophilus (Bacillus stearothermophilus).